The following is a 468-amino-acid chain: ATP synthase subunit beta 2 (468 aa).

Residue 145–152 participates in ATP binding; the sequence is GGAGVGKT.

It belongs to the ATPase alpha/beta chains family. F-type ATPases have 2 components, CF(1) - the catalytic core - and CF(0) - the membrane proton channel. CF(1) has five subunits: alpha(3), beta(3), gamma(1), delta(1), epsilon(1). CF(0) has three main subunits: a(1), b(2) and c(9-12). The alpha and beta chains form an alternating ring which encloses part of the gamma chain. CF(1) is attached to CF(0) by a central stalk formed by the gamma and epsilon chains, while a peripheral stalk is formed by the delta and b chains.

The protein resides in the cell membrane. The catalysed reaction is ATP + H2O + 4 H(+)(in) = ADP + phosphate + 5 H(+)(out). Produces ATP from ADP in the presence of a proton gradient across the membrane. The catalytic sites are hosted primarily by the beta subunits. The chain is ATP synthase subunit beta 2 from Mycoplasmopsis pulmonis (strain UAB CTIP) (Mycoplasma pulmonis).